The chain runs to 52 residues: MFRWAIIFAVIALIASLLGFGGVAGLSKDFAVILLVVAVILAIVGFISRGRV.

2 consecutive transmembrane segments (helical) span residues 6-26 (IIFAVIALIASLLGFGGVAGL) and 30-50 (FAVILLVVAVILAIVGFISRG).

The protein belongs to the UPF0391 family.

The protein localises to the cell membrane. The polypeptide is UPF0391 membrane protein ACIAD3602 (Acinetobacter baylyi (strain ATCC 33305 / BD413 / ADP1)).